The following is a 524-amino-acid chain: Na(+)/H(+) antiporter NhaB (524 aa).

A run of 12 helical transmembrane segments spans residues 23–43, 44–64, 97–117, 120–140, 144–164, 203–223, 236–256, 304–324, 354–374, 392–412, 448–468, and 476–496; these read IAILAFLIINPLVFSLSPFYA, GWLLVIEFIFTLAMALKCYPL, LLLIFMVAGIYFMKQLLLFVF, LLLNIRSKIVLSLAFCLAAAF, FLDALTVIAVVISVAVGFYGI, LLMHAGVGTALGGVMTMVGEP, FVSFLLRMAPVTVPVFCCGIL, ALVGVWLVSALAFHLAEVGLI, FTALLTVFFSIVAVIIDQHLF, LFYLFNGLLSSISDNVFVGTV, ATPNGQAAFLFLLTSALAPLI, and VWMALPYTVVMTLVGLLCVIF.

Belongs to the NhaB Na(+)/H(+) (TC 2.A.34) antiporter family.

Its subcellular location is the cell inner membrane. The catalysed reaction is 2 Na(+)(in) + 3 H(+)(out) = 2 Na(+)(out) + 3 H(+)(in). Functionally, na(+)/H(+) antiporter that extrudes sodium in exchange for external protons. This is Na(+)/H(+) antiporter NhaB from Edwardsiella ictaluri (strain 93-146).